The sequence spans 201 residues: Protease (201 aa).

Active-site residues include His53, Asp70, and Cys121.

This sequence belongs to the peptidase C5 family. Interacts with protease cofactor pVI-C; this interaction is necessary for protease activation.

It is found in the virion. The protein localises to the host nucleus. It catalyses the reaction Cleaves proteins of the adenovirus and its host cell at two consensus sites: -Yaa-Xaa-Gly-Gly-|-Xaa- and -Yaa-Xaa-Gly-Xaa-|-Gly- (in which Yaa is Met, Ile or Leu, and Xaa is any amino acid).. Requires DNA and protease cofactor for maximal activation. Inside nascent virions, becomes partially activated by binding to the viral DNA, allowing it to cleave the cofactor that binds to the protease and fully activates it. Actin, like the viral protease cofactor, seems to act as a cofactor in the cleavage of cytokeratin 18 and of actin itself. Cleaves viral precursor proteins (pTP, pIIIa, pVI, pVII, pVIII, and pX) inside newly assembled particles giving rise to mature virions. Protease complexed to its cofactor slides along the viral DNA to specifically locate and cleave the viral precursors. Mature virions have a weakened organization compared to the unmature virions, thereby facilitating subsequent uncoating. Without maturation, the particle lacks infectivity and is unable to uncoat. Late in adenovirus infection, in the cytoplasm, may participate in the cytoskeleton destruction. Cleaves host cell cytoskeletal keratins K7 and K18. The chain is Protease from Equine adenovirus B serotype 2 (EAdV-2).